Reading from the N-terminus, the 645-residue chain is Synaptotagmin-16 (645 aa).

3 disordered regions span residues 102–121 (AQNS…STMS), 144–192 (EHHL…DSDE), and 206–344 (QSFR…PSGV). Residues 167 to 177 (ETVNGKKQVNS) show a composition bias toward polar residues. Positions 179-192 (GDDEELSTSSDSDE) are enriched in acidic residues. The segment covering 287–303 (HQESSVVQSLRRQSTEG) has biased composition (polar residues). A C2 1 domain is found at 350 to 469 (KCGDLDVIFE…HPEGEMKVTL (120 aa)). A disordered region spans residues 478–503 (SSGGSPLSPSAVSHSDSTSSTQSLSH). Positions 485-502 (SPSAVSHSDSTSSTQSLS) are enriched in low complexity. The 136-residue stretch at 505–640 (GAPELLVGLS…TKGQQICRWH (136 aa)) folds into the C2 2 domain.

It belongs to the synaptotagmin family. Homodimer. Can also form heterodimers. In terms of tissue distribution, expressed in brain.

Its function is as follows. May be involved in the trafficking and exocytosis of secretory vesicles in non-neuronal tissues. Is Ca(2+)-independent. This Homo sapiens (Human) protein is Synaptotagmin-16 (SYT16).